A 2028-amino-acid polypeptide reads, in one-letter code: Transient receptor potential cation channel subfamily M member 6 (2028 aa).

The Cytoplasmic portion of the chain corresponds to 1-747 (MQVKKSWIEG…MWMGRLKMRK (747 aa)). The disordered stretch occupies residues 577–601 (QPYKSKEKPEDSQKSKKKSKERQSL). A compositionally biased stretch (basic and acidic residues) spans 580-590 (KSKEKPEDSQK). The chain crosses the membrane as a helical span at residues 748–768 (NSWLKIIISILLPPMILTLEF). Residues 769–847 (KSKAEMSHVP…YEFYSAPFVK (79 aa)) are Extracellular-facing. A helical transmembrane segment spans residues 848–868 (FWFYTMAYLAFLMLFTYTVLV). The Cytoplasmic segment spans residues 869-910 (EMQPQPSVHEWLVIIYIFTNAIEKVREICISEPSKFKQKVKM). Residues 911 to 931 (WLSEYWNLMETVAIGLFAVGF) traverse the membrane as a helical segment. Residues 932–945 (GLRWGHPPLQTAGR) are Extracellular-facing. The helical transmembrane segment at 946 to 966 (LIYCIDIIFWFSRLMDFFAVN) threads the bilayer. Residues 967–978 (QHAGPYVTMIAK) are Cytoplasmic-facing. The helical transmembrane segment at 979 to 999 (MAANMFYIVIIMAIVLLSFGV) threads the bilayer. Topologically, residues 1000 to 1018 (ARKAILSPKEPPSWRLARD) are extracellular. Residues 1019-1039 (IVFEPYWMMYGEVYASDIDVC) constitute an intramembrane region (pore-forming). At 1040–1053 (SNETSCPPGSFLTP) the chain is on the extracellular side. The chain crosses the membrane as a helical span at residues 1054–1074 (FLQAVYLFVQYIIMVNLLIAC). Over 1075 to 2028 (FNNIYLDIKS…RSSLEDHTRL (954 aa)) the chain is Cytoplasmic. Basic and acidic residues-rich tracts occupy residues 1313–1323 (KREASHVREEQ) and 1665–1677 (DHLRQPQENRDKT). Disordered stretches follow at residues 1313–1339 (KREASHVREEQEEREMEQRTTASGISH) and 1658–1694 (RHTTQASDHLRQPQENRDKTPTWNSGSTSLSRSFLTR). The span at 1682–1694 (SGSTSLSRSFLTR) shows a compositional bias: low complexity. The residue at position 1730 (Thr-1730) is a Phosphothreonine; by autocatalysis. One can recognise an Alpha-type protein kinase domain in the interval 1756–1986 (TLDKSMSSWS…CCGKLRLPDL (231 aa)). Residues Gly-1783, Gly-1784, Leu-1785, Arg-1786, and Lys-1810 each contribute to the ADP site. Residue Thr-1857 is modified to Phosphothreonine; by autocatalysis. Glu-1882 and Met-1885 together coordinate ADP. A Zn(2+)-binding site is contributed by His-1915. Asp-1929 acts as the Proton acceptor in catalysis. Residue Asp-1939 participates in ADP binding. Residues His-1972, Cys-1974, and Cys-1978 each contribute to the Zn(2+) site. Residues 2009–2028 (TEELPERDKNRSSLEDHTRL) form a disordered region. Basic and acidic residues predominate over residues 2012 to 2028 (LPERDKNRSSLEDHTRL).

It in the C-terminal section; belongs to the protein kinase superfamily. Alpha-type protein kinase family. ALPK subfamily. In the N-terminal section; belongs to the transient receptor (TC 1.A.4) family. LTrpC subfamily. TRPM6 sub-subfamily. As to quaternary structure, forms heteromers with TRPM7; TRPM6 increases the current amplitude of TRPM6/7 heteromers as compared to TRPM7 homomers. Interacts (via kinase domain) with RACK1. Autophosphorylated; autophosphorylation controls the protein kinase activity of TRPM6 towards their substrates. Autophosphorylation of Thr-1857 in the kinase domain is essential for the inhibitory effect of RACK1. In terms of processing, the C-terminus of TRPM6 is proteolytically cleaved in vivo, in a cell type-specific fashion, releasing the kinase module from the transmembrane domain. The cleaved kinase fragments are translocated to the nucleus to phosphorylate histones and regulate gene expression.

It is found in the cell membrane. The protein localises to the apical cell membrane. Its subcellular location is the nucleus. It catalyses the reaction L-seryl-[protein] + ATP = O-phospho-L-seryl-[protein] + ADP + H(+). It carries out the reaction L-threonyl-[protein] + ATP = O-phospho-L-threonyl-[protein] + ADP + H(+). The catalysed reaction is Mg(2+)(in) = Mg(2+)(out). The enzyme catalyses Ca(2+)(in) = Ca(2+)(out). It catalyses the reaction Zn(2+)(in) = Zn(2+)(out). With respect to regulation, strongly inhibited by intracellular Mg(2+); unlikely to be active at physiological levels of intracellular Mg(2+). In the heteromeric TRPM6-TRPM7 channels complexes, TRPM7 are able to offset the very high sensitivity of TRPM6 to cytosolic Mg(2+) to physiologically relevant concentrations, whereas TRPM6 relieve TRPM7 from the inhibitory action of Mg-ATP. Consequently, the association of TRPM6 with TRPM7 allow for high constitutive activity of TRPM6/7 in the presence of physiological levels of Mg(2+) and Mg-ATP. The kinase activity is controlled through the autophosphorylation of a serine/threonine-rich region located to the N-terminal of the catalytic domain. Functionally, bifunctional protein that combines an ion channel with an intrinsic kinase domain, enabling it to modulate cellular functions either by conducting ions through the pore or by phosphorylating downstream proteins via its kinase domain. Crucial for Mg(2+) homeostasis. Has an important role in epithelial magnesium transport and in the active Mg(2+) absorption in the gut and kidney. However, whether TRPM6 forms functional homomeric channels by itself or functions primarily as a subunit of heteromeric TRPM6-TRPM7 channels, is still under debate. Its function is as follows. The C-terminal kinase domain can be cleaved from the channel segment in a cell-type-specific fashion. The cleaved kinase fragments can translocate to the nucleus, and bind chromatin-remodeling complex proteins to ultimately phosphorylate specific Ser/Thr residues of histones known to be functionally important for cell differentiation and development. In Mus musculus (Mouse), this protein is Transient receptor potential cation channel subfamily M member 6 (Trpm6).